Consider the following 85-residue polypeptide: Large ribosomal subunit protein bL27 (85 aa).

Residues 1-21 (MAHKKAGGSTRNGRDSESKRL) form a disordered region.

This sequence belongs to the bacterial ribosomal protein bL27 family.

The sequence is that of Large ribosomal subunit protein bL27 from Pseudomonas putida (strain W619).